A 379-amino-acid chain; its full sequence is Probable pectin lyase B (379 aa).

The signal sequence occupies residues 1 to 20 (MHYKLLFAAAAASLASAVSA). 2 disulfide bridges follow: C83/C102 and C92/C226. Residues N129 and N252 are each glycosylated (N-linked (GlcNAc...) asparagine). Residue R256 is part of the active site. A disulfide bond links C323 and C331.

It belongs to the polysaccharide lyase 1 family.

The protein localises to the secreted. It catalyses the reaction Eliminative cleavage of (1-&gt;4)-alpha-D-galacturonan methyl ester to give oligosaccharides with 4-deoxy-6-O-methyl-alpha-D-galact-4-enuronosyl groups at their non-reducing ends.. Functionally, pectinolytic enzymes consist of four classes of enzymes: pectin lyase, polygalacturonase, pectin methylesterase and rhamnogalacturonase. Among pectinolytic enzymes, pectin lyase is the most important in depolymerization of pectin, since it cleaves internal glycosidic bonds of highly methylated pectins. In Aspergillus niger (strain ATCC MYA-4892 / CBS 513.88 / FGSC A1513), this protein is Probable pectin lyase B (pelB).